The primary structure comprises 294 residues: Lipoyl synthase (294 aa).

[4Fe-4S] cluster is bound by residues cysteine 38, cysteine 43, cysteine 49, cysteine 64, cysteine 68, cysteine 71, and serine 277. The 217-residue stretch at 50–266 folds into the Radical SAM core domain; sequence WSRGTATFLL…RSFAEGAGFR (217 aa).

The protein belongs to the radical SAM superfamily. Lipoyl synthase family. [4Fe-4S] cluster serves as cofactor.

Its subcellular location is the cytoplasm. The catalysed reaction is [[Fe-S] cluster scaffold protein carrying a second [4Fe-4S](2+) cluster] + N(6)-octanoyl-L-lysyl-[protein] + 2 oxidized [2Fe-2S]-[ferredoxin] + 2 S-adenosyl-L-methionine + 4 H(+) = [[Fe-S] cluster scaffold protein] + N(6)-[(R)-dihydrolipoyl]-L-lysyl-[protein] + 4 Fe(3+) + 2 hydrogen sulfide + 2 5'-deoxyadenosine + 2 L-methionine + 2 reduced [2Fe-2S]-[ferredoxin]. The protein operates within protein modification; protein lipoylation via endogenous pathway; protein N(6)-(lipoyl)lysine from octanoyl-[acyl-carrier-protein]: step 2/2. In terms of biological role, catalyzes the radical-mediated insertion of two sulfur atoms into the C-6 and C-8 positions of the octanoyl moiety bound to the lipoyl domains of lipoate-dependent enzymes, thereby converting the octanoylated domains into lipoylated derivatives. This Pelodictyon phaeoclathratiforme (strain DSM 5477 / BU-1) protein is Lipoyl synthase.